A 241-amino-acid chain; its full sequence is Glucosamine-6-phosphate deaminase (241 aa).

Residue Asp-67 is the Proton acceptor; for enolization step of the active site. The For ring-opening step role is filled by Asn-136. Residue His-138 is the Proton acceptor; for ring-opening step of the active site. The active-site For ring-opening step is the Glu-143.

The protein belongs to the glucosamine/galactosamine-6-phosphate isomerase family. NagB subfamily.

The enzyme catalyses alpha-D-glucosamine 6-phosphate + H2O = beta-D-fructose 6-phosphate + NH4(+). The protein operates within amino-sugar metabolism; N-acetylneuraminate degradation; D-fructose 6-phosphate from N-acetylneuraminate: step 5/5. Catalyzes the reversible isomerization-deamination of glucosamine 6-phosphate (GlcN6P) to form fructose 6-phosphate (Fru6P) and ammonium ion. The chain is Glucosamine-6-phosphate deaminase from Clostridium novyi (strain NT).